The chain runs to 427 residues: MSVKWEKQEGNVGKLTFEIEQEKVKEGLDRAFVKVRKTLNVPGFRKGKVPRQIFNQRFGEEALYQDALDILLPEVYSAAIDEAGIDPVDTPQVNIESMEKGETWVLTAEVTVKPEVKLGDYKGLEVEKRETELTTEELEAELKQLQERQAELVVKEDAPAENGDTVILDFEGFKDGVAFEGGQAENHSLELGSGQFIPGFEEKLVGLKAGDEADIELTFPEEYHAEDLAGQPVVFKVKLHEIKTKEVPALDDELAKDIDEEVETLDELKEKISKRLQEAKEESVAQAKQEEVIAKAVENAEVDIPHAMVHHEADHLMNHFAQDLQAQGLTPELYYQFTGQTEEAMHAQMEKDAEKRVKMNLVLEAIAEAENIEPTEEAIDEEISTLAEKYGMEKDAVRAALGDMSELKSDLKIRKAIDVLLDSAVEK.

The region spanning 163-248 (GDTVILDFEG…LHEIKTKEVP (86 aa)) is the PPIase FKBP-type domain.

It belongs to the FKBP-type PPIase family. Tig subfamily.

It localises to the cytoplasm. It carries out the reaction [protein]-peptidylproline (omega=180) = [protein]-peptidylproline (omega=0). Its function is as follows. Involved in protein export. Acts as a chaperone by maintaining the newly synthesized protein in an open conformation. Functions as a peptidyl-prolyl cis-trans isomerase. The protein is Trigger factor of Listeria monocytogenes serotype 4a (strain HCC23).